We begin with the raw amino-acid sequence, 331 residues long: Probable cytosolic iron-sulfur protein assembly protein Ciao1 (331 aa).

WD repeat units lie at residues 12 to 51 (GHKG…WTTK), 57 to 96 (GHKR…ATLE), 97 to 136 (GHEN…EFEC), 142 to 181 (AHSQ…SDWD), 188 to 227 (SHTS…NDAG), 246 to 285 (EHSR…KRDA), and 297 to 331 (AHEQ…KLQE).

It belongs to the WD repeat CIA1 family.

In terms of biological role, essential component of the cytosolic iron-sulfur (Fe/S) protein assembly machinery. Required for the maturation of extramitochondrial Fe/S proteins. This Drosophila virilis (Fruit fly) protein is Probable cytosolic iron-sulfur protein assembly protein Ciao1.